The chain runs to 376 residues: ATP phosphoribosyltransferase regulatory subunit (376 aa).

Belongs to the class-II aminoacyl-tRNA synthetase family. HisZ subfamily. Heteromultimer composed of HisG and HisZ subunits.

Its subcellular location is the cytoplasm. It functions in the pathway amino-acid biosynthesis; L-histidine biosynthesis; L-histidine from 5-phospho-alpha-D-ribose 1-diphosphate: step 1/9. Its function is as follows. Required for the first step of histidine biosynthesis. May allow the feedback regulation of ATP phosphoribosyltransferase activity by histidine. This chain is ATP phosphoribosyltransferase regulatory subunit, found in Brucella anthropi (strain ATCC 49188 / DSM 6882 / CCUG 24695 / JCM 21032 / LMG 3331 / NBRC 15819 / NCTC 12168 / Alc 37) (Ochrobactrum anthropi).